A 214-amino-acid chain; its full sequence is MKAYQRHFIELALAKNVLKFGEFTLKSGRVSPYFFNAGLFNTGRDLALLGQFYAQTLIDNHVPCDVLFGPAYKGIPIATTTAVALVEHHDMDVPYCFNRKEAKDHGEGGTLVGSPLTGNVVIVDDVITAGTAIRESMEIIKQHDATLSGVLLSLDRQEKGRGSLSAIQELERDYQCQVYSIITLDDLISYLTESETLSAHLPAVKAYRERYGIN.

Residue lysine 26 coordinates 5-phospho-alpha-D-ribose 1-diphosphate. Residue 34 to 35 (FF) participates in orotate binding. 5-phospho-alpha-D-ribose 1-diphosphate is bound by residues 72–73 (YK), arginine 99, lysine 100, lysine 103, histidine 105, and 124–132 (DDVITAGTA). Orotate contacts are provided by threonine 128 and arginine 156.

Belongs to the purine/pyrimidine phosphoribosyltransferase family. PyrE subfamily. In terms of assembly, homodimer. It depends on Mg(2+) as a cofactor.

It carries out the reaction orotidine 5'-phosphate + diphosphate = orotate + 5-phospho-alpha-D-ribose 1-diphosphate. The protein operates within pyrimidine metabolism; UMP biosynthesis via de novo pathway; UMP from orotate: step 1/2. Its function is as follows. Catalyzes the transfer of a ribosyl phosphate group from 5-phosphoribose 1-diphosphate to orotate, leading to the formation of orotidine monophosphate (OMP). This is Orotate phosphoribosyltransferase from Proteus mirabilis (strain HI4320).